Reading from the N-terminus, the 201-residue chain is Thymidylate kinase (201 aa).

Residue 7–14 coordinates ATP; sequence GIDGSGKS.

It belongs to the thymidylate kinase family.

The catalysed reaction is dTMP + ATP = dTDP + ADP. Phosphorylation of dTMP to form dTDP in both de novo and salvage pathways of dTTP synthesis. The polypeptide is Thymidylate kinase (Thermosipho africanus (strain TCF52B)).